A 47-amino-acid chain; its full sequence is Large ribosomal subunit protein bL34 (47 aa).

Belongs to the bacterial ribosomal protein bL34 family.

This chain is Large ribosomal subunit protein bL34, found in Mycobacterium sp. (strain JLS).